A 346-amino-acid chain; its full sequence is MKQIINPLKGNNDKVPIWFMRQAGRYLPEYKKVRETTKNFLDFCYDVSKATEVTLQPIKRYGFDAAIIFSDILVLPHALGWEVDFKENIGPILKQFKSQEDFKYLQINPNYKLEKVYEIIKKVKKELPSPISLIGFAGSPWTVMSYMLEGKGKQDFKTSKKFIYENKILAEELLNFITEKTADHLINQAKSGADVLKLFDSWSGVLAEEEFTKFVIEPTKKIILKVKEVFPKTPIIAFPKGAGLLYEKFIKEVPIDVLAVDQMVPLEKMKEWSDKVIVQGNLDPVVLLTNKEIIKEKTYKILQAMKGKNFIFNLGHGILPETPTENVEFLTEYVRLYEEKNSNSTF.

Substrate is bound by residues 21 to 25 (RQAGR), D71, Y146, S201, and H316.

The protein belongs to the uroporphyrinogen decarboxylase family. Homodimer.

It is found in the cytoplasm. The enzyme catalyses uroporphyrinogen III + 4 H(+) = coproporphyrinogen III + 4 CO2. Its pathway is porphyrin-containing compound metabolism; protoporphyrin-IX biosynthesis; coproporphyrinogen-III from 5-aminolevulinate: step 4/4. In terms of biological role, catalyzes the decarboxylation of four acetate groups of uroporphyrinogen-III to yield coproporphyrinogen-III. This chain is Uroporphyrinogen decarboxylase, found in Rickettsia rickettsii (strain Iowa).